The following is a 160-amino-acid chain: Large ribosomal subunit protein uL16 (160 aa).

The segment covering 138 to 148 has biased composition (polar residues); the sequence is KNLEVSSQENT. The interval 138 to 160 is disordered; the sequence is KNLEVSSQENTKNNKESQEEVKQ. Residues 149–160 show a composition bias toward basic and acidic residues; the sequence is KNNKESQEEVKQ.

The protein belongs to the universal ribosomal protein uL16 family. As to quaternary structure, part of the 50S ribosomal subunit.

Binds 23S rRNA and is also seen to make contacts with the A and possibly P site tRNAs. This is Large ribosomal subunit protein uL16 from Prochlorococcus marinus (strain MIT 9312).